Here is a 237-residue protein sequence, read N- to C-terminus: Ribonuclease PH (237 aa).

Residues arginine 86 and 124–126 (GTR) each bind phosphate.

Belongs to the RNase PH family. In terms of assembly, homohexameric ring arranged as a trimer of dimers.

It carries out the reaction tRNA(n+1) + phosphate = tRNA(n) + a ribonucleoside 5'-diphosphate. Functionally, phosphorolytic 3'-5' exoribonuclease that plays an important role in tRNA 3'-end maturation. Removes nucleotide residues following the 3'-CCA terminus of tRNAs; can also add nucleotides to the ends of RNA molecules by using nucleoside diphosphates as substrates, but this may not be physiologically important. Probably plays a role in initiation of 16S rRNA degradation (leading to ribosome degradation) during starvation. The polypeptide is Ribonuclease PH (Methylobacterium radiotolerans (strain ATCC 27329 / DSM 1819 / JCM 2831 / NBRC 15690 / NCIMB 10815 / 0-1)).